A 481-amino-acid chain; its full sequence is Replication factor C large subunit (481 aa).

ATP is bound at residue Gly-43–Thr-50. Basic and acidic residues-rich tracts occupy residues Lys-408–Asp-433 and Val-441–Ala-457. Residues Lys-408–Phe-481 form a disordered region. A compositionally biased stretch (polar residues) spans Ala-471 to Phe-481.

The protein belongs to the activator 1 small subunits family. RfcL subfamily. As to quaternary structure, heteromultimer composed of small subunits (RfcS) and large subunits (RfcL).

Functionally, part of the RFC clamp loader complex which loads the PCNA sliding clamp onto DNA. This is Replication factor C large subunit from Methanoregula boonei (strain DSM 21154 / JCM 14090 / 6A8).